The following is a 124-amino-acid chain: Fluoride-specific ion channel FluC (124 aa).

3 helical membrane-spanning segments follow: residues 20–40 (LLSI…TLLV), 60–80 (ISPE…TTFS), and 102–122 (VLLN…LIFS). Na(+)-binding residues include Gly74 and Thr77.

Belongs to the fluoride channel Fluc/FEX (TC 1.A.43) family.

The protein localises to the cell inner membrane. The catalysed reaction is fluoride(in) = fluoride(out). Its activity is regulated as follows. Na(+) is not transported, but it plays an essential structural role and its presence is essential for fluoride channel function. Fluoride-specific ion channel. Important for reducing fluoride concentration in the cell, thus reducing its toxicity. The chain is Fluoride-specific ion channel FluC from Shewanella frigidimarina (strain NCIMB 400).